Reading from the N-terminus, the 162-residue chain is Transcription elongation factor GreA (162 aa).

Residues 9 to 38 adopt a coiled-coil conformation; the sequence is QGYKALEEELARLKSERPEIIQAIKEAREE.

This sequence belongs to the GreA/GreB family.

Necessary for efficient RNA polymerase transcription elongation past template-encoded arresting sites. The arresting sites in DNA have the property of trapping a certain fraction of elongating RNA polymerases that pass through, resulting in locked ternary complexes. Cleavage of the nascent transcript by cleavage factors such as GreA or GreB allows the resumption of elongation from the new 3'terminus. GreA releases sequences of 2 to 3 nucleotides. This chain is Transcription elongation factor GreA, found in Desulfovibrio desulfuricans (strain ATCC 27774 / DSM 6949 / MB).